The chain runs to 338 residues: Phenylalanine--tRNA ligase alpha subunit (338 aa).

Mg(2+) is bound at residue Glu259.

Belongs to the class-II aminoacyl-tRNA synthetase family. Phe-tRNA synthetase alpha subunit type 1 subfamily. In terms of assembly, tetramer of two alpha and two beta subunits. The cofactor is Mg(2+).

Its subcellular location is the cytoplasm. The enzyme catalyses tRNA(Phe) + L-phenylalanine + ATP = L-phenylalanyl-tRNA(Phe) + AMP + diphosphate + H(+). The sequence is that of Phenylalanine--tRNA ligase alpha subunit from Janthinobacterium sp. (strain Marseille) (Minibacterium massiliensis).